The chain runs to 517 residues: Beclin-1-like protein (517 aa).

The interval 76 to 106 (LPRHKPPQSQGIPPRPRGASSPQPDATQSGK) is disordered. Residues 95-105 (SSPQPDATQSG) are compositionally biased toward polar residues. The stretch at 172–266 (CLECMRVLSD…NRFNELEDRY (95 aa)) forms a coiled coil.

It belongs to the beclin family. As to quaternary structure, component of a phosphatidylinositol 3-kinase (PI3K) complex composed of ATG6, SH3P2 and FREE1. Interacts with SINAT1, SINAT2, SINAT5, SINAT6, TRAF1A and TRAF1B. Interacts with TUBB8/TUB8. Component of a complex made of VPS38/USL1 and PI3K main subunits such as VPS15, ATG6/VPS30 and VPS34. Binds directly to VPS38/USL1. Ubiquitinated. The interaction with SINAT1 or SINAT2, and the presence of TRAF1A/MUSE14 and TRAF1B/MUSE13, mediates its proteasome-dependent degradation. In terms of tissue distribution, highly expressed in mature pollen grains. Expressed in roots, leaves, stems, flowers and siliques.

Its subcellular location is the cytoplasm. The protein resides in the cytoskeleton. In terms of biological role, required for normal plant development. Required for pollen germination. Required for autophagic activity. Required to limit the pathogen-associated cell death response. May be involved in vacuolar protein sorting. Binds to microtubules. May facilitate efficient recruitment of other ATG proteins to assemble scaffolds for autophagosome biogenesis. The protein is Beclin-1-like protein of Arabidopsis thaliana (Mouse-ear cress).